A 400-amino-acid chain; its full sequence is Dehydrogenase efuE (400 aa).

NAD(+) contacts are provided by residues 222-223 (AI), 303-305 (TAR), and Asp-329. Arg-305 is a catalytic residue. The active site involves Glu-334. Catalysis depends on His-352, which acts as the Proton donor. NAD(+) is bound at residue 352-355 (HLGG).

This sequence belongs to the D-isomer specific 2-hydroxyacid dehydrogenase family.

It functions in the pathway secondary metabolite biosynthesis; terpenoid biosynthesis. In terms of biological role, dehydrogenase; part of the gene cluster that mediates the biosynthesis of enfumafungin, a glycosylated fernene-type triterpenoid with potent antifungal activity, mediated by its interaction with beta-1,3-glucan synthase and the fungal cell wall. The pathway begins with the terpene cyclase-glycosyl transferase fusion protein that most likely uses 2,3-oxidosqualene as substrate and catalyzes glycosylation immediately after cyclization. The fernene glycoside then could be processed by the desaturase efuI which catalyzes isomerization of a double bond established by efuA to form the core structure. The latter would then undergo a series of hydroxylations in unknown order at C-2, C-19, C-23 and C-25, which would be catalyzed by two of the three cytochrome P450 monooxygenases efuB, efuG or efuH. The hydroxy-group at C-25 becomes oxidized by the dehydrogenase efuE to enable a spontaneous, non-enzymatic hemiacetal formation with C-23. After hydroxylation at C-2, acetylation by the acetyltransferase efuC takes place. The final steps in enfumafungin biosynthesis require expansion of the 5-membered ring by lactonization via a Baeyer-Villiger reaction mediated by one of the BGC's cytochrome P450 monooxygenases (efuB, efuG or efuH) followed by ring cleavage. This type of reaction would establish a double bond between C-20 and C-21 which could be reduced by the reductase efuL to form the final product. The chain is Dehydrogenase efuE from Hormonema carpetanum.